Consider the following 304-residue polypeptide: tRNA-5-methyluridine(54) 2-sulfurtransferase (304 aa).

Cys3, Cys6, Cys22, and His25 together coordinate Zn(2+). ATP-binding residues include Ala53 and Ile79. Residues Cys131 and Cys134 each coordinate [4Fe-4S] cluster. ATP contacts are provided by Arg138 and Gly157. Cys224 contacts [4Fe-4S] cluster. Zn(2+) is bound by residues Cys274, Cys277, Cys286, and Cys289.

It belongs to the TtcA family. TtuA subfamily. In terms of assembly, homodimer. [4Fe-4S] cluster serves as cofactor. The cofactor is Mg(2+).

The enzyme catalyses 5-methyluridine(54) in tRNA + hydrogen sulfide + ATP = 5-methyl-2-thiouridine(54) in tRNA + AMP + diphosphate. It participates in tRNA modification. Functionally, catalyzes the ATP-dependent 2-thiolation of 5-methyluridine residue at position 54 in the T loop of tRNAs, leading to 5-methyl-2-thiouridine (m(5)s(2)U or s(2)T). This modification allows thermal stabilization of tRNAs in thermophilic microorganisms, and is required for cell growth at high temperatures. Can use free sulfide as sulfur source in vitro. The protein is tRNA-5-methyluridine(54) 2-sulfurtransferase of Thermotoga maritima (strain ATCC 43589 / DSM 3109 / JCM 10099 / NBRC 100826 / MSB8).